Consider the following 290-residue polypeptide: Enoyl-CoA hydratase, mitochondrial (290 aa).

The transit peptide at 1-27 (MATLRVLLSCVRGPLRPPVRCPAWRPF) directs the protein to the mitochondrion. Threonine 46 carries the post-translational modification Phosphothreonine. 98 to 101 (ADIK) contributes to the substrate binding site. Lysine 101 carries the N6-acetyllysine; alternate modification. Lysine 101 bears the N6-succinyllysine; alternate mark. Serine 114 is modified (phosphoserine). Position 115 is an N6-acetyllysine; alternate (lysine 115). At lysine 115 the chain carries N6-succinyllysine; alternate. Lysine 118 carries the post-translational modification N6-acetyllysine. Glycine 141 contacts substrate. Residue lysine 204 is modified to N6-succinyllysine. Lysine 211 is subject to N6-acetyllysine.

This sequence belongs to the enoyl-CoA hydratase/isomerase family. As to quaternary structure, homohexamer; dimer of trimers.

The protein localises to the mitochondrion matrix. It carries out the reaction a (3S)-3-hydroxyacyl-CoA = a (2E)-enoyl-CoA + H2O. It catalyses the reaction a (3E)-enoyl-CoA = a 4-saturated (2E)-enoyl-CoA. The enzyme catalyses (3E)-hexenoyl-CoA = (2E)-hexenoyl-CoA. The catalysed reaction is (3S)-3-hydroxybutanoyl-CoA = (2E)-butenoyl-CoA + H2O. It carries out the reaction 3-hydroxyisovaleryl-CoA = 3-methylbut-2-enoyl-CoA + H2O. It catalyses the reaction 3-hydroxypropanoyl-CoA = acryloyl-CoA + H2O. The enzyme catalyses 3-hydroxybutanoyl-CoA = (2E)-butenoyl-CoA + H2O. The catalysed reaction is 2-methylpropenoyl-CoA + H2O = (S)-3-hydroxyisobutanoyl-CoA. It carries out the reaction (3S)-hydroxyhexanoyl-CoA = (2E)-hexenoyl-CoA + H2O. It catalyses the reaction (3S)-hydroxydecanoyl-CoA = (2E)-decenoyl-CoA + H2O. The protein operates within lipid metabolism; fatty acid beta-oxidation. In terms of biological role, converts unsaturated trans-2-enoyl-CoA species ((2E)-enoyl-CoA) to the corresponding (3S)-3-hydroxyacyl-CoA species through addition of a water molecule to the double bond. Catalyzes the hydration of medium- and short-chained fatty enoyl-CoA thioesters from 4 carbons long (C4) up to C16. Has high substrate specificity for crotonyl-CoA ((2E)-butenoyl-CoA) and moderate specificity for acryloyl-CoA, 3-methylcrotonyl-CoA (3-methyl-(2E)-butenoyl-CoA) and methacrylyl-CoA ((2E)-2-methylpropenoyl-CoA). Can bind tiglyl-CoA (2-methylcrotonoyl-CoA), but hydrates only a small amount of this substrate. Plays a key role in the beta-oxidation spiral of short- and medium-chain fatty acid oxidation. At a lower rate than the hydratase reaction, catalyzes the isomerase reaction of trans-3-enoyl-CoA species (such as (3E)-hexenoyl-CoA) to trans-2-enoyl-CoA species (such as (2E)-hexenoyl-CoA), which are subsequently hydrated to 3(S)-3-hydroxyacyl-CoA species (such as (3S)-hydroxyhexanoyl-CoA). The protein is Enoyl-CoA hydratase, mitochondrial (ECHS1) of Pongo abelii (Sumatran orangutan).